A 285-amino-acid polypeptide reads, in one-letter code: Elongation factor Ts (285 aa).

An involved in Mg(2+) ion dislocation from EF-Tu region spans residues 75-78 (TDFV).

This sequence belongs to the EF-Ts family.

It is found in the cytoplasm. Its function is as follows. Associates with the EF-Tu.GDP complex and induces the exchange of GDP to GTP. It remains bound to the aminoacyl-tRNA.EF-Tu.GTP complex up to the GTP hydrolysis stage on the ribosome. This is Elongation factor Ts from Alcanivorax borkumensis (strain ATCC 700651 / DSM 11573 / NCIMB 13689 / SK2).